The sequence spans 288 residues: Polyamine aminopropyltransferase (288 aa).

Residues 9-238 (ETLHDQFGQY…GIMTFAWATD (230 aa)) enclose the PABS domain. Gln-33 provides a ligand contact to S-methyl-5'-thioadenosine. Spermidine contacts are provided by His-64 and Asp-88. S-methyl-5'-thioadenosine is bound by residues Glu-108 and 140-141 (DG). Asp-158 acts as the Proton acceptor in catalysis. 158–161 (DCTD) is a spermidine binding site. Pro-165 lines the S-methyl-5'-thioadenosine pocket.

This sequence belongs to the spermidine/spermine synthase family. Homodimer or homotetramer.

The protein resides in the cytoplasm. The enzyme catalyses S-adenosyl 3-(methylsulfanyl)propylamine + putrescine = S-methyl-5'-thioadenosine + spermidine + H(+). It functions in the pathway amine and polyamine biosynthesis; spermidine biosynthesis; spermidine from putrescine: step 1/1. In terms of biological role, catalyzes the irreversible transfer of a propylamine group from the amino donor S-adenosylmethioninamine (decarboxy-AdoMet) to putrescine (1,4-diaminobutane) to yield spermidine. The sequence is that of Polyamine aminopropyltransferase from Shigella flexneri serotype 5b (strain 8401).